Reading from the N-terminus, the 156-residue chain is Small ribosomal subunit protein uS7 (156 aa).

Belongs to the universal ribosomal protein uS7 family. As to quaternary structure, part of the 30S ribosomal subunit. Contacts proteins S9 and S11.

One of the primary rRNA binding proteins, it binds directly to 16S rRNA where it nucleates assembly of the head domain of the 30S subunit. Is located at the subunit interface close to the decoding center, probably blocks exit of the E-site tRNA. This Acholeplasma laidlawii (strain PG-8A) protein is Small ribosomal subunit protein uS7.